The primary structure comprises 190 residues: Myosin, light chain 1, alkali; skeletal, fast (190 aa).

The segment covering 1–17 (MAPKKDAKKPEPPKKAE) has biased composition (basic and acidic residues). The disordered stretch occupies residues 1-33 (MAPKKDAKKPEPPKKAEPAPAPAPAPEPPKADA). Positions 19–28 (APAPAPAPEP) are enriched in pro residues. 2 consecutive EF-hand domains span residues 46–81 (DQME…LGQN) and 123–158 (ATYD…LGEK).

In terms of assembly, myosin is a hexamer of 2 heavy chains and 4 light chains. Does not bind calcium. In terms of tissue distribution, expressed in fast muscle fibers during skeletal muscle differentiation.

In terms of biological role, non-regulatory myosin light chain required for proper formation and/or maintenance of myofibers, and thus appropriate muscle function. The chain is Myosin, light chain 1, alkali; skeletal, fast from Danio rerio (Zebrafish).